Reading from the N-terminus, the 221-residue chain is Ribonuclease 3 (221 aa).

The 123-residue stretch at 1–123 folds into the RNase III domain; the sequence is MERTGHAFAD…LIAVLYLDGG (123 aa). E36 is a binding site for Mg(2+). D40 is an active-site residue. Mg(2+)-binding residues include D109 and E112. Residue E112 is part of the active site. The 70-residue stretch at 148–217 folds into the DRBM domain; the sequence is DAKTELQEWA…AAALLLREGV (70 aa).

It belongs to the ribonuclease III family. Homodimer. The cofactor is Mg(2+).

It localises to the cytoplasm. The enzyme catalyses Endonucleolytic cleavage to 5'-phosphomonoester.. In terms of biological role, digests double-stranded RNA. Involved in the processing of primary rRNA transcript to yield the immediate precursors to the large and small rRNAs (23S and 16S). Processes some mRNAs, and tRNAs when they are encoded in the rRNA operon. Processes pre-crRNA and tracrRNA of type II CRISPR loci if present in the organism. The protein is Ribonuclease 3 of Mesorhizobium japonicum (strain LMG 29417 / CECT 9101 / MAFF 303099) (Mesorhizobium loti (strain MAFF 303099)).